The sequence spans 215 residues: Large ribosomal subunit protein uL3 (215 aa).

Glutamine 156 is subject to N5-methylglutamine.

This sequence belongs to the universal ribosomal protein uL3 family. Part of the 50S ribosomal subunit. Forms a cluster with proteins L14 and L19. In terms of processing, methylated by PrmB.

In terms of biological role, one of the primary rRNA binding proteins, it binds directly near the 3'-end of the 23S rRNA, where it nucleates assembly of the 50S subunit. This is Large ribosomal subunit protein uL3 from Xylella fastidiosa (strain M23).